A 417-amino-acid chain; its full sequence is MLKKEDRIFTNLHGEQSHDLKSSKKLGDWDNTKALLNKGKEWIIEEVKKSGLRGRGGAGFSTGTKWSFMPKESKKPSYLVVNADESEPGTCKDRDILRYEPHKLIEGCLLASFAIGANSCYIYIRGEFYNEASNIQRALDEAYKDGLIGKNACGSGFNCDIYLHRGAGAYICGEETALLESLEGKKGMPRLKPPFPAGFGLYGCPTTINNVESIAVVPTILRRGASWFASIGKPNNTGTKIFCISGHVNKPCNVEEAMGIPLKEIIEKHAGGVRGGWDNLKAIIPGGSSVPLLPKSLCETADMDFDSLKAAGSSLGTGGIIVMDKSTDIIYAIARLSKFYMHESCGQCTPCREGTGWMWRVMMRLVKGDAKKSEIDQLLEVTKEIEGHTICALGDAAAWPIQGLIKHFRNEIESRIQ.

NAD(+) is bound at residue 54–63 (GRGGAGFSTG). An FMN-binding site is contributed by 166-213 (GAGAYICGEETALLESLEGKKGMPRLKPPFPAGFGLYGCPTTINNVES). 4 residues coordinate [4Fe-4S] cluster: cysteine 345, cysteine 348, cysteine 351, and cysteine 391.

Belongs to the complex I 51 kDa subunit family. The cofactor is FMN. It depends on [4Fe-4S] cluster as a cofactor.

The catalysed reaction is a quinone + NADH + 5 H(+)(in) = a quinol + NAD(+) + 4 H(+)(out). NDH-1 shuttles electrons from NADH, via FMN and iron-sulfur (Fe-S) centers, to quinones in the respiratory chain. Couples the redox reaction to proton translocation (for every two electrons transferred, four hydrogen ions are translocated across the cytoplasmic membrane), and thus conserves the redox energy in a proton gradient. The polypeptide is NADH-quinone oxidoreductase subunit F (nuoF) (Rickettsia bellii (strain OSU 85-389)).